We begin with the raw amino-acid sequence, 206 residues long: Large ribosomal subunit protein uL4 (206 aa).

It belongs to the universal ribosomal protein uL4 family. In terms of assembly, part of the 50S ribosomal subunit.

One of the primary rRNA binding proteins, this protein initially binds near the 5'-end of the 23S rRNA. It is important during the early stages of 50S assembly. It makes multiple contacts with different domains of the 23S rRNA in the assembled 50S subunit and ribosome. In terms of biological role, forms part of the polypeptide exit tunnel. This Rhodopseudomonas palustris (strain BisA53) protein is Large ribosomal subunit protein uL4.